A 275-amino-acid chain; its full sequence is Autophagy protein 5 (275 aa).

At methionine 1 the chain carries N-acetylmethionine. A Glycyl lysine isopeptide (Lys-Gly) (interchain with G-Cter in ATG12) cross-link involves residue lysine 130.

Belongs to the ATG5 family. In terms of assembly, forms a conjugate with ATG12. Part of the minor complex composed of 4 sets of ATG12-ATG5 and ATG16L1 (400 kDa); this complex interacts with ATG3 leading to disruption of ATG7 interaction and promotion of ATG8-like proteins lipidation. Forms an 800-kDa complex composed of ATG12-ATG5 and ATG16L2. The ATG12-ATG5 conjugate interacts with RAB33A; this interaction is bridged by ATG16L1 and promotes ATG12-ATG5-ATG16L1 complex recruitment to phagophores. Interacts with TECPR1; the interaction is direct and does not take place when ATG16L1 is associated with the ATG5-ATG12 conjugate. Interacts with DHX58/RIG-1, IFIH1/MDA5 and MAVS/IPS-1 in monomeric form as well as in ATG12-ATG5 conjugate form. The interaction with MAVS is further enhanced upon vesicular stomatitis virus (VSV) infection. Interacts with ATG3. Interacts with ATG7 and ATG10. Interacts with FADD. Interacts with Bassoon/BSN; this interaction is important for the regulation of presynaptic autophagy. Interacts with ATG16L2. In terms of processing, conjugated to ATG12; which is essential for autophagy, but is not required for association with isolation membrane. Acetylated by EP300.

It is found in the cytoplasm. Its subcellular location is the preautophagosomal structure membrane. Involved in autophagic vesicle formation. Conjugation with ATG12, through a ubiquitin-like conjugating system involving ATG7 as an E1-like activating enzyme and ATG10 as an E2-like conjugating enzyme, is essential for its function. The ATG12-ATG5 conjugate acts as an E3-like enzyme which is required for lipidation of ATG8 family proteins and their association to the vesicle membranes. Involved in mitochondrial quality control after oxidative damage, and in subsequent cellular longevity. Plays a critical role in multiple aspects of lymphocyte development and is essential for both B and T lymphocyte survival and proliferation. Required for optimal processing and presentation of antigens for MHC II. Involved in the maintenance of axon morphology and membrane structures, as well as in normal adipocyte differentiation. Promotes primary ciliogenesis through removal of OFD1 from centriolar satellites and degradation of IFT20 via the autophagic pathway. As part of the ATG8 conjugation system with ATG12 and ATG16L1, required for recruitment of LRRK2 to stressed lysosomes and induction of LRRK2 kinase activity in response to lysosomal stress. In terms of biological role, may play an important role in the apoptotic process, possibly within the modified cytoskeleton. Its expression is a relatively late event in the apoptotic process, occurring downstream of caspase activity. Plays a crucial role in IFN-gamma-induced autophagic cell death by interacting with FADD. The protein is Autophagy protein 5 of Sus scrofa (Pig).